The sequence spans 453 residues: Dibenzothiophene-sulfone monooxygenase (453 aa).

FMN contacts are provided by Asp-59, Thr-106, His-156, Tyr-160, and Ser-231.

Belongs to the NtaA/SnaA/DszA monooxygenase family. As to quaternary structure, homodimer.

The protein localises to the cytoplasm. The enzyme catalyses dibenzothiophene 5,5-dioxide + FMNH2 + NADH + O2 = 2'-hydroxybiphenyl-2-sulfinate + FMN + NAD(+) + H2O + H(+). It functions in the pathway sulfur metabolism; dibenzothiophene degradation. Catalyzes the second step of the '4S' desulfurization pathway that removes covalently bound sulfur from dibenzothiophene (DBT) without breaking carbon-carbon bonds. Metabolizes DBT-sulfone (DBTO2 or DBT 5,5-dioxide) to 2-(2'-hydroxyphenyl)benzene sulphinate (HBPS). The chain is Dibenzothiophene-sulfone monooxygenase from Rhodococcus erythropolis (strain XP).